The sequence spans 376 residues: Chaperone protein DnaJ (376 aa).

The 66-residue stretch at 5-70 (DYYEVLGVAK…QKRAAYDQYG (66 aa)) folds into the J domain. The segment at 136-214 (GYDTQIRVPS…CHGSGKVKET (79 aa)) adopts a CR-type zinc-finger fold. Zn(2+)-binding residues include cysteine 149, cysteine 152, cysteine 166, cysteine 169, cysteine 188, cysteine 191, cysteine 202, and cysteine 205. 4 CXXCXGXG motif repeats span residues 149-156 (CEVCHGSG), 166-173 (CPTCHGQG), 188-195 (CPKCHGTG), and 202-209 (CAHCHGSG).

It belongs to the DnaJ family. In terms of assembly, homodimer. Zn(2+) serves as cofactor.

It localises to the cytoplasm. Functionally, participates actively in the response to hyperosmotic and heat shock by preventing the aggregation of stress-denatured proteins and by disaggregating proteins, also in an autonomous, DnaK-independent fashion. Unfolded proteins bind initially to DnaJ; upon interaction with the DnaJ-bound protein, DnaK hydrolyzes its bound ATP, resulting in the formation of a stable complex. GrpE releases ADP from DnaK; ATP binding to DnaK triggers the release of the substrate protein, thus completing the reaction cycle. Several rounds of ATP-dependent interactions between DnaJ, DnaK and GrpE are required for fully efficient folding. Also involved, together with DnaK and GrpE, in the DNA replication of plasmids through activation of initiation proteins. The sequence is that of Chaperone protein DnaJ from Burkholderia multivorans (strain ATCC 17616 / 249).